The following is a 1248-amino-acid chain: Apoptotic protease-activating factor 1 (1248 aa).

The 90-residue stretch at Met1 to Gly90 folds into the CARD domain. The region spanning Ser104–Leu415 is the NB-ARC domain. Residues Gly154–Ser161 and Arg265 contribute to the ATP site. The WD 1-1 repeat unit spans residues Pro613–Glu652. A WD 1-2 repeat occupies Ala655–Thr694. The stretch at Glu697–Thr738 is one WD 1-3 repeat. Residues Gly741–Ser780 form a WD 1-4 repeat. One copy of the WD 1-5 repeat lies at Asp796–His836. A WD 1-6 repeat occupies Gly838–Asp877. One copy of the WD 1-7 repeat lies at Gly880–Glu910. The interpropeller linker stretch occupies residues Glu910 to Met921. The stretch at Leu922 to Tyr958 is one WD 2-1 repeat. A WD 2-2 repeat occupies Leu959–Ser998. A WD 2-3 repeat occupies Gln1001–Leu1040. The WD 2-4 repeat unit spans residues Gly1042–Asp1080. Residues Cys1083 to Glu1122 form a WD 2-5 repeat. A WD 2-6 repeat occupies Gly1125–Leu1164. Residues Thr1175–Thr1212 form a WD 2-7 repeat. The stretch at Phe1213 to Glu1248 is one WD 2-8 repeat.

Monomer. Oligomerizes to a heptameric ring, known as the apoptosome, upon binding of cytochrome c and dATP. Oligomeric Apaf-1 and pro-caspase-9 bind to each other via their respective NH2-terminal CARD domains and consecutively mature caspase-9 is released from the complex. Pro-caspase-3 is recruited into the Apaf-1-pro-caspase-9 complex via interaction with pro-caspase-9. Interacts with APIP. Interacts (via CARD and NACHT domains) with NAIP/BIRC1 (via NACHT domain). Interacts with CIAO2A. As to expression, ubiquitous. Highest levels of expression in adult spleen and peripheral blood leukocytes, and in fetal brain, kidney and lung. Isoform 1 is expressed in heart, kidney and liver.

The protein localises to the cytoplasm. In terms of biological role, oligomeric Apaf-1 mediates the cytochrome c-dependent autocatalytic activation of pro-caspase-9 (Apaf-3), leading to the activation of caspase-3 and apoptosis. This activation requires ATP. Isoform 6 is less effective in inducing apoptosis. This is Apoptotic protease-activating factor 1 from Homo sapiens (Human).